Reading from the N-terminus, the 449-residue chain is Ribulose bisphosphate carboxylase large chain (449 aa).

Lys7 carries the post-translational modification N6,N6,N6-trimethyllysine. Substrate-binding residues include Asn116 and Thr166. Catalysis depends on Lys168, which acts as the Proton acceptor. Lys170 contributes to the substrate binding site. Mg(2+) is bound by residues Lys194, Asp196, and Glu197. The residue at position 194 (Lys194) is an N6-carboxylysine. His287 serves as the catalytic Proton acceptor. Residues Arg288, His320, and Ser372 each contribute to the substrate site.

Belongs to the RuBisCO large chain family. Type I subfamily. As to quaternary structure, heterohexadecamer of 8 large chains and 8 small chains; disulfide-linked. The disulfide link is formed within the large subunit homodimers. The cofactor is Mg(2+). Post-translationally, the disulfide bond which can form in the large chain dimeric partners within the hexadecamer appears to be associated with oxidative stress and protein turnover.

The protein resides in the plastid. Its subcellular location is the chloroplast. It catalyses the reaction 2 (2R)-3-phosphoglycerate + 2 H(+) = D-ribulose 1,5-bisphosphate + CO2 + H2O. The catalysed reaction is D-ribulose 1,5-bisphosphate + O2 = 2-phosphoglycolate + (2R)-3-phosphoglycerate + 2 H(+). Functionally, ruBisCO catalyzes two reactions: the carboxylation of D-ribulose 1,5-bisphosphate, the primary event in carbon dioxide fixation, as well as the oxidative fragmentation of the pentose substrate in the photorespiration process. Both reactions occur simultaneously and in competition at the same active site. The chain is Ribulose bisphosphate carboxylase large chain from Liriope muscari (Big blue lilyturf).